The chain runs to 309 residues: MNILLANPRGFCAGVDRAISIVERALELFSPPIYVRHEVVHNRYVVQNLKERGAVFVEELDQVPDDSIVIFSAHGVSQAVRAEAKRRGLKVFDATCPLVTKVHLQVARASRKGIECILIGHAGHPEVEGTMGQYDNSAGGVHLVESPEDVAKLVVKDPDNLCFVTQTTLSMDDTADVISSLQKKYPSIEGPRKDDICYATQNRQDAVRNVAEEVELFIVVGSKNSSNSNRLRELAQKKGTQAFLVDNADDVDATWFNGVERVAVTAGASAPEVLVKQVVDAIAKMAPSVVTEVEGQLEDTVFAVPAELR.

Cysteine 12 provides a ligand contact to [4Fe-4S] cluster. Positions 41 and 74 each coordinate (2E)-4-hydroxy-3-methylbut-2-enyl diphosphate. The dimethylallyl diphosphate site is built by histidine 41 and histidine 74. Residues histidine 41 and histidine 74 each coordinate isopentenyl diphosphate. Residue cysteine 96 participates in [4Fe-4S] cluster binding. Histidine 124 serves as a coordination point for (2E)-4-hydroxy-3-methylbut-2-enyl diphosphate. Histidine 124 lines the dimethylallyl diphosphate pocket. Histidine 124 contacts isopentenyl diphosphate. Catalysis depends on glutamate 126, which acts as the Proton donor. Threonine 167 contacts (2E)-4-hydroxy-3-methylbut-2-enyl diphosphate. Cysteine 197 serves as a coordination point for [4Fe-4S] cluster. Residues serine 225, serine 226, asparagine 227, and serine 269 each coordinate (2E)-4-hydroxy-3-methylbut-2-enyl diphosphate. Serine 225, serine 226, asparagine 227, and serine 269 together coordinate dimethylallyl diphosphate. Residues serine 225, serine 226, asparagine 227, and serine 269 each contribute to the isopentenyl diphosphate site.

It belongs to the IspH family. Requires [4Fe-4S] cluster as cofactor.

It carries out the reaction isopentenyl diphosphate + 2 oxidized [2Fe-2S]-[ferredoxin] + H2O = (2E)-4-hydroxy-3-methylbut-2-enyl diphosphate + 2 reduced [2Fe-2S]-[ferredoxin] + 2 H(+). The enzyme catalyses dimethylallyl diphosphate + 2 oxidized [2Fe-2S]-[ferredoxin] + H2O = (2E)-4-hydroxy-3-methylbut-2-enyl diphosphate + 2 reduced [2Fe-2S]-[ferredoxin] + 2 H(+). It functions in the pathway isoprenoid biosynthesis; dimethylallyl diphosphate biosynthesis; dimethylallyl diphosphate from (2E)-4-hydroxy-3-methylbutenyl diphosphate: step 1/1. Its pathway is isoprenoid biosynthesis; isopentenyl diphosphate biosynthesis via DXP pathway; isopentenyl diphosphate from 1-deoxy-D-xylulose 5-phosphate: step 6/6. In terms of biological role, catalyzes the conversion of 1-hydroxy-2-methyl-2-(E)-butenyl 4-diphosphate (HMBPP) into a mixture of isopentenyl diphosphate (IPP) and dimethylallyl diphosphate (DMAPP). Acts in the terminal step of the DOXP/MEP pathway for isoprenoid precursor biosynthesis. In Shewanella pealeana (strain ATCC 700345 / ANG-SQ1), this protein is 4-hydroxy-3-methylbut-2-enyl diphosphate reductase.